The primary structure comprises 157 residues: SsrA-binding protein (157 aa).

This sequence belongs to the SmpB family.

It localises to the cytoplasm. Functionally, required for rescue of stalled ribosomes mediated by trans-translation. Binds to transfer-messenger RNA (tmRNA), required for stable association of tmRNA with ribosomes. tmRNA and SmpB together mimic tRNA shape, replacing the anticodon stem-loop with SmpB. tmRNA is encoded by the ssrA gene; the 2 termini fold to resemble tRNA(Ala) and it encodes a 'tag peptide', a short internal open reading frame. During trans-translation Ala-aminoacylated tmRNA acts like a tRNA, entering the A-site of stalled ribosomes, displacing the stalled mRNA. The ribosome then switches to translate the ORF on the tmRNA; the nascent peptide is terminated with the 'tag peptide' encoded by the tmRNA and targeted for degradation. The ribosome is freed to recommence translation, which seems to be the essential function of trans-translation. In Aquifex aeolicus (strain VF5), this protein is SsrA-binding protein.